Here is a 706-residue protein sequence, read N- to C-terminus: Probable rhamnogalacturonate lyase B (706 aa).

A signal peptide spans 1–19 (MRLLHPLIPASLLLTLTSA). Residues N27, N40, N143, N239, N285, N380, N495, N569, N597, and N638 are each glycosylated (N-linked (GlcNAc...) asparagine).

The protein belongs to the polysaccharide lyase 4 family.

Its subcellular location is the secreted. The enzyme catalyses Endotype eliminative cleavage of L-alpha-rhamnopyranosyl-(1-&gt;4)-alpha-D-galactopyranosyluronic acid bonds of rhamnogalacturonan I domains in ramified hairy regions of pectin leaving L-rhamnopyranose at the reducing end and 4-deoxy-4,5-unsaturated D-galactopyranosyluronic acid at the non-reducing end.. Pectinolytic enzymes consist of four classes of enzymes: pectin lyase, polygalacturonase, pectin methylesterase and rhamnogalacturonase. Degrades the rhamnogalacturonan I (RG-I) backbone of pectin. This is Probable rhamnogalacturonate lyase B (rglB) from Aspergillus niger (strain ATCC MYA-4892 / CBS 513.88 / FGSC A1513).